A 101-amino-acid polypeptide reads, in one-letter code: Small ribosomal subunit protein uS10 (101 aa).

The protein belongs to the universal ribosomal protein uS10 family. Part of the 30S ribosomal subunit.

Involved in the binding of tRNA to the ribosomes. This is Small ribosomal subunit protein uS10 from Mycobacteroides abscessus (strain ATCC 19977 / DSM 44196 / CCUG 20993 / CIP 104536 / JCM 13569 / NCTC 13031 / TMC 1543 / L948) (Mycobacterium abscessus).